The primary structure comprises 171 residues: 3-hydroxydecanoyl-[acyl-carrier-protein] dehydratase (171 aa).

H71 is an active-site residue.

This sequence belongs to the thioester dehydratase family. FabA subfamily. In terms of assembly, homodimer.

Its subcellular location is the cytoplasm. It catalyses the reaction a (3R)-hydroxyacyl-[ACP] = a (2E)-enoyl-[ACP] + H2O. The catalysed reaction is (3R)-hydroxydecanoyl-[ACP] = (2E)-decenoyl-[ACP] + H2O. The enzyme catalyses (2E)-decenoyl-[ACP] = (3Z)-decenoyl-[ACP]. The protein operates within lipid metabolism; fatty acid biosynthesis. Its function is as follows. Necessary for the introduction of cis unsaturation into fatty acids. Catalyzes the dehydration of (3R)-3-hydroxydecanoyl-ACP to E-(2)-decenoyl-ACP and then its isomerization to Z-(3)-decenoyl-ACP. Can catalyze the dehydratase reaction for beta-hydroxyacyl-ACPs with saturated chain lengths up to 16:0, being most active on intermediate chain length. The protein is 3-hydroxydecanoyl-[acyl-carrier-protein] dehydratase of Agrobacterium fabrum (strain C58 / ATCC 33970) (Agrobacterium tumefaciens (strain C58)).